Reading from the N-terminus, the 77-residue chain is Small ribosomal subunit protein bS18 (77 aa).

The protein belongs to the bacterial ribosomal protein bS18 family. Part of the 30S ribosomal subunit. Forms a tight heterodimer with protein bS6.

In terms of biological role, binds as a heterodimer with protein bS6 to the central domain of the 16S rRNA, where it helps stabilize the platform of the 30S subunit. The sequence is that of Small ribosomal subunit protein bS18 from Bacillus thuringiensis subsp. konkukian (strain 97-27).